We begin with the raw amino-acid sequence, 428 residues long: UDP-N-acetylglucosamine 1-carboxyvinyltransferase 2 (428 aa).

Residue 22-23 (KN) coordinates phosphoenolpyruvate. Arg-92 is a UDP-N-acetyl-alpha-D-glucosamine binding site. Cys-116 serves as the catalytic Proton donor. Residue Cys-116 is modified to 2-(S-cysteinyl)pyruvic acid O-phosphothioketal. UDP-N-acetyl-alpha-D-glucosamine-binding positions include 121–125 (RPIDQ), Asp-304, and Ile-326.

The protein belongs to the EPSP synthase family. MurA subfamily.

The protein localises to the cytoplasm. The enzyme catalyses phosphoenolpyruvate + UDP-N-acetyl-alpha-D-glucosamine = UDP-N-acetyl-3-O-(1-carboxyvinyl)-alpha-D-glucosamine + phosphate. Its pathway is cell wall biogenesis; peptidoglycan biosynthesis. Its function is as follows. Cell wall formation. Adds enolpyruvyl to UDP-N-acetylglucosamine. This chain is UDP-N-acetylglucosamine 1-carboxyvinyltransferase 2, found in Shouchella clausii (strain KSM-K16) (Alkalihalobacillus clausii).